We begin with the raw amino-acid sequence, 195 residues long: Holliday junction branch migration complex subunit RuvA (195 aa).

A domain I region spans residues 1–62 (MIEFVKGPVA…EDQQTLYGFR (62 aa)). Positions 63-141 (SRRERELFNK…ELAPDYVPNE (79 aa)) are domain II. Residues 141-145 (EGLFA) are flexible linker. The tract at residues 146–195 (QGASELDEACEALVALGYSEREIAKVRKALSGEILTTDAYIKRALQLLLK) is domain III.

Belongs to the RuvA family. Homotetramer. Forms an RuvA(8)-RuvB(12)-Holliday junction (HJ) complex. HJ DNA is sandwiched between 2 RuvA tetramers; dsDNA enters through RuvA and exits via RuvB. An RuvB hexamer assembles on each DNA strand where it exits the tetramer. Each RuvB hexamer is contacted by two RuvA subunits (via domain III) on 2 adjacent RuvB subunits; this complex drives branch migration. In the full resolvosome a probable DNA-RuvA(4)-RuvB(12)-RuvC(2) complex forms which resolves the HJ.

The protein resides in the cytoplasm. The RuvA-RuvB-RuvC complex processes Holliday junction (HJ) DNA during genetic recombination and DNA repair, while the RuvA-RuvB complex plays an important role in the rescue of blocked DNA replication forks via replication fork reversal (RFR). RuvA specifically binds to HJ cruciform DNA, conferring on it an open structure. The RuvB hexamer acts as an ATP-dependent pump, pulling dsDNA into and through the RuvAB complex. HJ branch migration allows RuvC to scan DNA until it finds its consensus sequence, where it cleaves and resolves the cruciform DNA. This chain is Holliday junction branch migration complex subunit RuvA, found in Exiguobacterium sp. (strain ATCC BAA-1283 / AT1b).